A 148-amino-acid polypeptide reads, in one-letter code: MKTLLTLGLLLLSVTAQAKVYERCEFARTLKRNGMAGYYGVSLADWVCLAQHESNYNTRATNYNRGDQSTDYGIFQINSRYWCNDGKTPRAVNACGINCSALLQDDITAAIQCAKRVVRDPQGIRAWVAWRAHCQNRDLSQYIRNCGV.

An N-terminal signal peptide occupies residues 1-18; that stretch reads MKTLLTLGLLLLSVTAQA. Residues 19-148 form the C-type lysozyme domain; the sequence is KVYERCEFAR…LSQYIRNCGV (130 aa). Intrachain disulfides connect cysteine 24/cysteine 146, cysteine 48/cysteine 134, cysteine 83/cysteine 99, and cysteine 95/cysteine 113. Residues glutamate 53 and aspartate 71 contribute to the active site.

Belongs to the glycosyl hydrolase 22 family. As to quaternary structure, monomer. In terms of tissue distribution, expressed weakly in myeloblasts, moderately in immature macrophages, and strongly in both mature macrophages and macrophage-rich tissues.

Its subcellular location is the secreted. The enzyme catalyses Hydrolysis of (1-&gt;4)-beta-linkages between N-acetylmuramic acid and N-acetyl-D-glucosamine residues in a peptidoglycan and between N-acetyl-D-glucosamine residues in chitodextrins.. Its function is as follows. Lysozymes have primarily a bacteriolytic function; those in tissues and body fluids are associated with the monocyte-macrophage system and enhance the activity of immunoagents. Lyz2 is active against a range of Gram-positive and Gram-negative bacteria. More effective than Lyz1 in killing Gram-negative bacteria. Lyz1 and Lyz2 are equally effective in killing Gram-positive bacteria. The polypeptide is Lysozyme C-2 (Lyz2) (Mus musculus (Mouse)).